We begin with the raw amino-acid sequence, 233 residues long: Pre-hexon-linking protein VIII (233 aa).

Threonine 64 is subject to Phosphothreonine; by host. A propeptide spanning residues 112-163 is cleaved from the precursor; sequence ARHSFRYKGRTEPYPSPAIKRVLIRGKGIQLNDEVTSPLGVRPDGVFQLGGS. Residue serine 180 is modified to Phosphoserine; by host.

This sequence belongs to the adenoviridae hexon-linking protein family. Interacts with the peripentonal hexons as well as the hexons in the facets. Part of a complex composed of the core-capsid bridging protein, the endosome lysis protein VI and the hexon-linking protein VIII; these interactions bridge the virus core to the capsid. Cleaved by the viral protease during virion maturation. May cause the middle segment to be shed from the capsid.

It is found in the virion. Its subcellular location is the host nucleus. Functionally, structural component of the virion that acts as a cement protein on the capsid interior and which glue the peripentonal hexons and group-of-nine hexons together. This chain is Pre-hexon-linking protein VIII, found in Homo sapiens (Human).